A 438-amino-acid polypeptide reads, in one-letter code: 23S rRNA (uracil(1939)-C(5))-methyltransferase RlmD (438 aa).

Positions R10–R68 constitute a TRAM domain. Residues C81, C87, C90, and C168 each coordinate [4Fe-4S] cluster. Positions 271, 300, 305, 321, 348, and 369 each coordinate S-adenosyl-L-methionine. C395 serves as the catalytic Nucleophile.

This sequence belongs to the class I-like SAM-binding methyltransferase superfamily. RNA M5U methyltransferase family. RlmD subfamily.

The enzyme catalyses uridine(1939) in 23S rRNA + S-adenosyl-L-methionine = 5-methyluridine(1939) in 23S rRNA + S-adenosyl-L-homocysteine + H(+). Its function is as follows. Catalyzes the formation of 5-methyl-uridine at position 1939 (m5U1939) in 23S rRNA. This chain is 23S rRNA (uracil(1939)-C(5))-methyltransferase RlmD, found in Erwinia tasmaniensis (strain DSM 17950 / CFBP 7177 / CIP 109463 / NCPPB 4357 / Et1/99).